A 710-amino-acid polypeptide reads, in one-letter code: Solute carrier organic anion transporter family member 3A1 (710 aa).

Met1 bears the N-acetylmethionine mark. Residues 1–25 (MQAKKPGGSSGGGRSGELQGDEAQR) form a disordered region. Topologically, residues 1–40 (MQAKKPGGSSGGGRSGELQGDEAQRNKKKKKKVSCFSNIK) are cytoplasmic. Residues 41 to 60 (IFLVSECALMLAQGTVGAYL) form a helical membrane-spanning segment. Topologically, residues 61–79 (VSVLTTLERRFNLQSADVG) are extracellular. Residues 80-100 (VIASSFEIGNLALILFVSYFG) form a helical membrane-spanning segment. Over 101-106 (ARGHRP) the chain is Cytoplasmic. A helical membrane pass occupies residues 107–131 (RLIGCGGIVMALGALLSALPEFLTH). Topologically, residues 132–174 (QYKYEAGEIRWGAEGRDVCAANGSGGDQGPDPDLICRSRTATN) are extracellular. N-linked (GlcNAc...) asparagine glycosylation occurs at Asn153. The helical transmembrane segment at 175 to 203 (MMYLLLIGAQVLLGIGATPVQPLGVSYID) threads the bilayer. Residues 204-222 (DHVRRKDSSLYIGILFTML) are Cytoplasmic-facing. Residues 223–243 (VFGPACGFILGSFCTKIYVDA) form a helical membrane-spanning segment. Residues 244 to 261 (VFIDTSNLDITPDDPRWI) are Extracellular-facing. The chain crosses the membrane as a helical span at residues 262-286 (GAWWGGFLLCGALLFFSSVLMFGFP). Topologically, residues 287 to 344 (QSLPPHSDPALESEQAMLPEREYERPKPSNGVLRHPLEPDSSASCFQQLRVIPKVTKH) are cytoplasmic. Residues 345–366 (LLSNPVFTCIILAACMEIAVVA) form a helical membrane-spanning segment. Residues 367-386 (GFAAFLGKYLEQQFNLTTSS) lie on the Extracellular side of the membrane. A glycan (N-linked (GlcNAc...) asparagine) is linked at Asn381. A helical transmembrane segment spans residues 387-410 (ANQLLGMTAIPCACLGIFLGGLLV). The Cytoplasmic segment spans residues 411–414 (KKLS). The helical transmembrane segment at 415-438 (LSALGAIRMAMLVNLVSTACYVSF) threads the bilayer. Topologically, residues 439–539 (LFLGCDTGPV…PGCQEAFLTF (101 aa)) are extracellular. Residue Asn457 is glycosylated (N-linked (GlcNAc...) asparagine). A Kazal-like domain is found at 465-513 (LDPYSSCNKNCECQTDSFTPVCGADGITYLSACFAGCNSTNLTGCACLM). Intrachain disulfides connect Cys471-Cys501, Cys477-Cys497, and Cys486-Cys511. 3 N-linked (GlcNAc...) asparagine glycosylation sites follow: Asn502, Asn505, and Asn519. Residues 540 to 562 (LCVMCVCSMIGAMAQTPSVIILI) form a helical membrane-spanning segment. Over 563-571 (RTVSPELKS) the chain is Cytoplasmic. Residues 572–597 (YALGVLFLLLRLLGFIPPPLIFGAGI) traverse the membrane as a helical segment. The Extracellular portion of the chain corresponds to 598–630 (DSTCLFWSTFCGEQGACALYDNVAYRYLYVSIA). A helical membrane pass occupies residues 631–648 (IALKSFAFLLYTTTWQCL). Residues 649-705 (RKNYKRYIKNHEGGLSTSEFFASTLTLDNLGRDPVPANQTHRTKFIYNLEDHEWCEN) lie on the Cytoplasmic side of the membrane.

This sequence belongs to the organo anion transporter (TC 2.A.60) family.

The protein localises to the basolateral cell membrane. Its subcellular location is the apical cell membrane. The protein resides in the basal cell membrane. The enzyme catalyses L-thyroxine(out) = L-thyroxine(in). It catalyses the reaction prostaglandin E1(out) = prostaglandin E1(in). The catalysed reaction is prostaglandin E2(out) = prostaglandin E2(in). It carries out the reaction prostaglandin F2alpha(out) = prostaglandin F2alpha(in). The enzyme catalyses (5Z,8Z,11Z,14Z)-eicosatetraenoate(out) = (5Z,8Z,11Z,14Z)-eicosatetraenoate(in). It catalyses the reaction taurocholate(out) = taurocholate(in). The catalysed reaction is glycocholate(out) = glycocholate(in). It carries out the reaction estrone 3-sulfate(out) = estrone 3-sulfate(in). The enzyme catalyses argipressin(out) = argipressin(in). Putative organic anion antiporter with apparent broad substrate specificity. Recognizes various substrates including thyroid hormone L-thyroxine, prostanoids such as prostaglandin E1 and E2, bile acids such as taurocholate, glycolate and glycochenodeoxycholate and peptide hormones such as L-arginine vasopressin, likely operating in a tissue-specific manner. The transport mechanism, its electrogenicity and potential tissue-specific counterions remain to be elucidated. This chain is Solute carrier organic anion transporter family member 3A1 (SLCO3A1), found in Bos taurus (Bovine).